An 852-amino-acid chain; its full sequence is Bifunctional uridylyltransferase/uridylyl-removing enzyme (852 aa).

The uridylyltransferase stretch occupies residues 1-318 (MPENLSSALE…STPVRVTLRI (318 aa)). A uridylyl-removing region spans residues 319-672 (DDDYIQVNNQ…SRILPQSDSF (354 aa)). An HD domain is found at 436 to 558 (VDDHILAVVR…VQTHERLSAL (123 aa)). ACT domains are found at residues 673–757 (QVMV…SCNR) and 785–852 (SVEI…EQLA).

The protein belongs to the GlnD family. It depends on Mg(2+) as a cofactor.

The catalysed reaction is [protein-PII]-L-tyrosine + UTP = [protein-PII]-uridylyl-L-tyrosine + diphosphate. The enzyme catalyses [protein-PII]-uridylyl-L-tyrosine + H2O = [protein-PII]-L-tyrosine + UMP + H(+). Its activity is regulated as follows. Uridylyltransferase (UTase) activity is inhibited by glutamine, while glutamine activates uridylyl-removing (UR) activity. Modifies, by uridylylation and deuridylylation, the PII regulatory proteins (GlnB and homologs), in response to the nitrogen status of the cell that GlnD senses through the glutamine level. Under low glutamine levels, catalyzes the conversion of the PII proteins and UTP to PII-UMP and PPi, while under higher glutamine levels, GlnD hydrolyzes PII-UMP to PII and UMP (deuridylylation). Thus, controls uridylylation state and activity of the PII proteins, and plays an important role in the regulation of nitrogen assimilation and metabolism. This is Bifunctional uridylyltransferase/uridylyl-removing enzyme from Neisseria gonorrhoeae (strain ATCC 700825 / FA 1090).